The sequence spans 284 residues: Bifunctional protein FolD (284 aa).

NADP(+)-binding positions include 165 to 167, serine 190, and isoleucine 231; that span reads GRS.

The protein belongs to the tetrahydrofolate dehydrogenase/cyclohydrolase family. Homodimer.

The catalysed reaction is (6R)-5,10-methylene-5,6,7,8-tetrahydrofolate + NADP(+) = (6R)-5,10-methenyltetrahydrofolate + NADPH. The enzyme catalyses (6R)-5,10-methenyltetrahydrofolate + H2O = (6R)-10-formyltetrahydrofolate + H(+). Its pathway is one-carbon metabolism; tetrahydrofolate interconversion. Functionally, catalyzes the oxidation of 5,10-methylenetetrahydrofolate to 5,10-methenyltetrahydrofolate and then the hydrolysis of 5,10-methenyltetrahydrofolate to 10-formyltetrahydrofolate. The polypeptide is Bifunctional protein FolD (Streptococcus thermophilus (strain CNRZ 1066)).